Reading from the N-terminus, the 265-residue chain is Tryptophan synthase alpha chain (265 aa).

Residues Glu-49 and Glu-60 each act as proton acceptor in the active site.

It belongs to the TrpA family. As to quaternary structure, tetramer of two alpha and two beta chains.

The catalysed reaction is (1S,2R)-1-C-(indol-3-yl)glycerol 3-phosphate + L-serine = D-glyceraldehyde 3-phosphate + L-tryptophan + H2O. It participates in amino-acid biosynthesis; L-tryptophan biosynthesis; L-tryptophan from chorismate: step 5/5. Functionally, the alpha subunit is responsible for the aldol cleavage of indoleglycerol phosphate to indole and glyceraldehyde 3-phosphate. The chain is Tryptophan synthase alpha chain from Janthinobacterium sp. (strain Marseille) (Minibacterium massiliensis).